The primary structure comprises 446 residues: ATP-dependent RNA helicase SUB2 (446 aa).

At serine 2 the chain carries N-acetylserine. Serine 13 and serine 37 each carry phosphoserine. The segment covering 23-41 has biased composition (low complexity); that stretch reads ASKAAEAGETGAATSATEG. The disordered stretch occupies residues 23–52; that stretch reads ASKAAEAGETGAATSATEGDNNNNTAAGDK. The Q motif motif lies at 62 to 90; sequence TGFKDFLLKPELSRAIIDCGFEHPSEVQQ. Residues 93–268 form the Helicase ATP-binding domain; the sequence is IPQSIHGTDV…RRFLQNPLEI (176 aa). Residue 106–113 coordinates ATP; that stretch reads AKSGLGKT. At threonine 169 the chain carries Phosphothreonine. The short motif at 215–218 is the DECD box element; it reads DECD. The Helicase C-terminal domain maps to 280–441; that stretch reads GLQQYYIKLE…EFPEEGIDPS (162 aa).

Belongs to the DEAD box helicase family. DECD subfamily. Component of the TREX complex composed of at least SUB2, TEX1, YRA1 and the four THO complex components: HPR1, MFT1, THO2 and THP1. Interacts with HPR1, YRA1, and YRA2. SUB2 may mediate the interaction between the THO complex and YRA1. Associates with growing mRNP complexes during transcription. This association requires the presence of HPR1. Also interacts with SAC3. Interacts with THO1 in the presence of RNA; this interaction facilitates RNA binding of SUB2.

It is found in the nucleus. It carries out the reaction ATP + H2O = ADP + phosphate + H(+). Its function is as follows. ATP-binding RNA helicase component of the TREX complex involved in transcription elongation and required for the export of mRNA out of the nucleus. SUB2 also plays a role in pre-mRNA splicing and spliceosome assembly. May be involved in rDNA and telomeric silencing, and maintenance of genome integrity. Associates with THO1, which facilitates RNA binding of SUB2 and likely plays a role in mRNA export. The protein is ATP-dependent RNA helicase SUB2 (SUB2) of Saccharomyces cerevisiae (strain ATCC 204508 / S288c) (Baker's yeast).